The following is a 318-amino-acid chain: L-carnitine dehydrogenase (318 aa).

Residue 14-19 (GAGVIG) participates in NAD(+) binding.

It belongs to the 3-hydroxyacyl-CoA dehydrogenase family. L-carnitine dehydrogenase subfamily. In terms of assembly, homodimer.

The protein localises to the cytoplasm. The catalysed reaction is carnitine + NAD(+) = 3-dehydrocarnitine + NADH + H(+). It participates in amine and polyamine metabolism; carnitine metabolism. Catalyzes the NAD(+)-dependent oxidation of L-carnitine to 3-dehydrocarnitine. The chain is L-carnitine dehydrogenase from Streptomyces coelicolor (strain ATCC BAA-471 / A3(2) / M145).